A 262-amino-acid chain; its full sequence is Abhydrolase domain-containing protein AFT2-1 (262 aa).

Residues 260–262 (SKL) carry the Peroxisomal targeting signal type 1 motif.

The protein belongs to the AB hydrolase superfamily. AKT2 hydrolase family.

The protein resides in the peroxisome. It functions in the pathway mycotoxin biosynthesis. Its function is as follows. Abhydrolase domain-containing protein; part of the gene clusters that mediate the biosynthesis of the host-selective toxins (HSTs) AF-toxins responsible for Alternaria black spot of strawberry disease by the strawberry pathotype. AF-toxin I and III are valine derivatives of 2,3-dyhydroxy-isovaleric acid and 2-hydroxy-isovaleric acid respectively, while AF II is an isoleucine derivative of 2-hydroxy-valeric acid. These derivatives are bound to a 9,10-epoxy-8-hydroxy-9-methyl-decatrienoic acid (EDA) moiety. On cellular level, AF-toxins affect plasma membrane of susceptible cells and cause a sudden increase in loss of K(+) after a few minutes of toxin treatment. The aldo-keto reductase AFTS1 catalyzes the conversion of 2-keto-isovaleric acid (2-KIV) to 2-hydroxy-isovaleric acid (2-HIV) by reduction of its ketone to an alcohol. The acyl-CoA ligase AFT1, the hydrolase AFT2 and the enoyl-CoA hydratases AFT3 and AFT6, but also the polyketide synthase AFT9, the acyl-CoA dehydrogenase AFT10, the cytochrome P450 monooxygenase AFT11 and the oxidoreductase AFT12 are all involved in the biosynthesis of the AK-, AF- and ACT-toxin common EDA structural moiety. The exact function of each enzyme, and of additional enzymes identified within the AF-toxin clusters have still to be determined. The polypeptide is Abhydrolase domain-containing protein AFT2-1 (Alternaria alternata (Alternaria rot fungus)).